Here is a 396-residue protein sequence, read N- to C-terminus: Phosphoglycerate kinase (396 aa).

Residues 21–23 (DIN), Arg36, 59–62 (HFGR), Arg114, and Arg147 each bind substrate. Residues Lys197, Glu319, and 349–352 (GGDT) contribute to the ATP site.

Belongs to the phosphoglycerate kinase family. In terms of assembly, monomer.

The protein localises to the cytoplasm. It carries out the reaction (2R)-3-phosphoglycerate + ATP = (2R)-3-phospho-glyceroyl phosphate + ADP. It functions in the pathway carbohydrate degradation; glycolysis; pyruvate from D-glyceraldehyde 3-phosphate: step 2/5. This chain is Phosphoglycerate kinase, found in Jannaschia sp. (strain CCS1).